The chain runs to 344 residues: Methionine import ATP-binding protein MetN (344 aa).

An ABC transporter domain is found at 2 to 241; sequence IKLEKISKIF…PQTQLAKEFI (240 aa). Residue 38–45 coordinates ATP; that stretch reads GASGAGKS.

It belongs to the ABC transporter superfamily. Methionine importer (TC 3.A.1.24) family. The complex is composed of two ATP-binding proteins (MetN), two transmembrane proteins (MetI) and a solute-binding protein (MetQ).

The protein localises to the cell inner membrane. It carries out the reaction L-methionine(out) + ATP + H2O = L-methionine(in) + ADP + phosphate + H(+). It catalyses the reaction D-methionine(out) + ATP + H2O = D-methionine(in) + ADP + phosphate + H(+). In terms of biological role, part of the ABC transporter complex MetNIQ involved in methionine import. Responsible for energy coupling to the transport system. The chain is Methionine import ATP-binding protein MetN from Pasteurella multocida (strain Pm70).